A 254-amino-acid chain; its full sequence is Sec-independent protein translocase protein TatC (254 aa).

The next 6 helical transmembrane spans lie at 40 to 60 (IFLSLGAVLVGVVACFIFVKP), 82 to 104 (FFFVSVKVAGYSGILVMSPFILY), 125 to 145 (VVLGSSVLFFAGLGFAYYALI), 172 to 192 (FVLLLMFSTGLAFQIPIIQVV), 210 to 230 (FVILGAMVLGAILTPSTDPLT), and 233 to 253 (LLAGAVLGLYFGGIGCVRLLG).

This sequence belongs to the TatC family. As to quaternary structure, forms a complex with TatA.

It localises to the cell inner membrane. Functionally, part of the twin-arginine translocation (Tat) system that transports large folded proteins containing a characteristic twin-arginine motif in their signal peptide across membranes. The chain is Sec-independent protein translocase protein TatC from Synechocystis sp. (strain ATCC 27184 / PCC 6803 / Kazusa).